The primary structure comprises 236 residues: ATP synthase subunit a (236 aa).

The next 5 helical transmembrane spans lie at 17–37, 80–100, 114–134, 179–199, and 208–228; these read LANVLMITVTSVIVFVIAVLA, MTLIMYIFVANMLGLPFSVVI, VVTLTLATMVVALSHYYGIKL, ILLALLAGSLATGVGGTIAAI, and FSIFVGAIQAFIFTMLTMVYM.

Belongs to the ATPase A chain family. As to quaternary structure, F-type ATPases have 2 components, CF(1) - the catalytic core - and CF(0) - the membrane proton channel. CF(1) has five subunits: alpha(3), beta(3), gamma(1), delta(1), epsilon(1). CF(0) has three main subunits: a(1), b(2) and c(9-12). The alpha and beta chains form an alternating ring which encloses part of the gamma chain. CF(1) is attached to CF(0) by a central stalk formed by the gamma and epsilon chains, while a peripheral stalk is formed by the delta and b chains.

The protein localises to the cell membrane. Functionally, key component of the proton channel; it plays a direct role in the translocation of protons across the membrane. The polypeptide is ATP synthase subunit a (Anoxybacillus flavithermus (strain DSM 21510 / WK1)).